Consider the following 347-residue polypeptide: uncharacterized protein (347 aa).

The next 10 membrane-spanning stretches (helical) occupy residues 6 to 26 (GSAS…GFAT), 37 to 57 (FGWF…LLGA), 90 to 110 (FMLF…GALF), 114 to 134 (LGMS…IVMT), 140 to 160 (IFGV…IVVA), 182 to 202 (WLLS…AVLV), 217 to 237 (GALI…LSLS), 262 to 282 (LIYL…NLYG), 289 to 309 (SFLP…AYIT), and 317 to 337 (LIST…GALL).

It is found in the cell membrane. This is an uncharacterized protein from Bacillus subtilis (strain 168).